A 689-amino-acid polypeptide reads, in one-letter code: Glycine--tRNA ligase beta subunit (689 aa).

Belongs to the class-II aminoacyl-tRNA synthetase family. In terms of assembly, tetramer of two alpha and two beta subunits.

The protein resides in the cytoplasm. The catalysed reaction is tRNA(Gly) + glycine + ATP = glycyl-tRNA(Gly) + AMP + diphosphate. In Salmonella paratyphi A (strain ATCC 9150 / SARB42), this protein is Glycine--tRNA ligase beta subunit.